The sequence spans 130 residues: MNFVFLWAALGGAIGSSLRYFVGKMMPSKFLMFESFPLGTFSVNIIGCFVIGFMGHLAVKKVFGDDFGIFFITGVLGGFTTFSSYGLDTLKLLQKSQYIEAISYVLGTNILGFIGVAIGWFLAKNFVGVN.

The next 4 membrane-spanning stretches (helical) occupy residues 3–23 (FVFL…YFVG), 39–59 (GTFS…HLAV), 67–87 (FGIF…SYGL), and 102–122 (ISYV…GWFL). Residues G77 and T80 each coordinate Na(+).

The protein belongs to the fluoride channel Fluc/FEX (TC 1.A.43) family.

It is found in the cell inner membrane. It catalyses the reaction fluoride(in) = fluoride(out). Its activity is regulated as follows. Na(+) is not transported, but it plays an essential structural role and its presence is essential for fluoride channel function. Fluoride-specific ion channel. Important for reducing fluoride concentration in the cell, thus reducing its toxicity. The chain is Fluoride-specific ion channel FluC from Helicobacter pylori (strain P12).